Here is a 753-residue protein sequence, read N- to C-terminus: Neuroendocrine convertase 1 (753 aa).

The signal sequence occupies residues Met1 to Ala27. The propeptide occupies Lys28–Arg110. The region spanning Gln129–Val450 is the Peptidase S8 domain. Asp167 functions as the Charge relay system in the catalytic mechanism. N-linked (GlcNAc...) asparagine glycosylation occurs at Asn173. The Charge relay system role is filled by His208. Intrachain disulfides connect Cys225-Cys374 and Cys317-Cys347. Catalysis depends on Ser382, which acts as the Charge relay system. The N-linked (GlcNAc...) asparagine glycan is linked to Asn401. One can recognise a P/Homo B domain in the interval Ser460 to Gln597. The cysteines at positions 467 and 494 are disulfide-linked. Disordered stretches follow at residues Arg617 to Glu657 and Ser676 to Ile695.

Belongs to the peptidase S8 family. Furin subfamily. The cofactor is Ca(2+).

Its subcellular location is the cytoplasmic vesicle. The protein resides in the secretory vesicle. The catalysed reaction is Release of protein hormones, neuropeptides and renin from their precursors, generally by hydrolysis of -Lys-Arg-|- bonds.. Its function is as follows. Involved in the processing of hormone and other protein precursors at sites comprised of pairs of basic amino acid residues. Substrates include POMC, renin, enkephalin, dynorphin, somatostatin, insulin and AGRP. In Bos taurus (Bovine), this protein is Neuroendocrine convertase 1 (PCSK1).